The following is a 344-amino-acid chain: Heat-inducible transcription repressor hrcA (344 aa).

It belongs to the HrcA family.

Functionally, negative regulator of class I heat shock genes (grpE-dnaK-dnaJ and groELS operons). Prevents heat-shock induction of these operons. The polypeptide is Heat-inducible transcription repressor hrcA (Streptococcus pyogenes serotype M3 (strain ATCC BAA-595 / MGAS315)).